We begin with the raw amino-acid sequence, 376 residues long: Homoserine dehydrogenase (376 aa).

NADP(+)-binding residues include Asn17 and Ile18. Ile18 contacts NAD(+). Residues Ile18, Lys67, Thr99, and Lys123 each contribute to the NADPH site. Positions 99 and 123 each coordinate NADP(+). Thr99 serves as a coordination point for NAD(+). Na(+) contacts are provided by Glu150, Val153, Ala155, and Leu157. Ser201 carries the phosphoserine modification. NADP(+)-binding residues include Gly213 and Glu216. The L-homoserine site is built by Glu216 and Asp227. The active-site Proton donor is the Lys231. Gly349 contributes to the NADP(+) binding site. Residue Gly349 participates in NAD(+) binding. Gly349 lines the NADPH pocket.

The protein belongs to the homoserine dehydrogenase family. It depends on a metal cation as a cofactor.

The enzyme catalyses L-homoserine + NADP(+) = L-aspartate 4-semialdehyde + NADPH + H(+). The catalysed reaction is L-homoserine + NAD(+) = L-aspartate 4-semialdehyde + NADH + H(+). The protein operates within amino-acid biosynthesis; L-methionine biosynthesis via de novo pathway; L-homoserine from L-aspartate: step 3/3. It participates in amino-acid biosynthesis; L-threonine biosynthesis; L-threonine from L-aspartate: step 3/5. In terms of biological role, catalyzes the conversion of L-aspartate-beta-semialdehyde (L-Asa) to L-homoserine (L-Hse), the third step in the biosynthesis of amino acids that derive from aspartate (the aspartate family of amino acids), including methioinine and threonine, the latter of which is a precursor to isoleucine; production of homoserine leads to a branch-point in the pathway as it can either be O-phosphorylated for processing to threonine, or O-acylated for processing to methionine. The protein is Homoserine dehydrogenase of Schizosaccharomyces pombe (strain 972 / ATCC 24843) (Fission yeast).